Consider the following 49-residue polypeptide: Disintegrin eristostatin (49 aa).

The 49-residue stretch at 1 to 49 (QEEPCATGPCCRRCKFKRAGKVCRVARGDWNDDYCTGKSCDCPKNPWNG) folds into the Disintegrin domain. Disulfide bonds link Cys-5-Cys-14, Cys-10-Cys-35, Cys-11-Cys-40, and Cys-23-Cys-42. Positions 27–29 (RGD) match the Cell attachment site motif.

This sequence belongs to the venom metalloproteinase (M12B) family. P-II subfamily. P-IIa sub-subfamily. In terms of assembly, monomer. In terms of tissue distribution, expressed by the venom gland.

It is found in the secreted. Is a potent inhibitor of ADP-induced platelet aggregation. Acts by binding to alpha-IIb/beta-3 (ITGA2B/ITGB3) receptor on the platelet surface. Binds with the same high affinity to resting and activated platelets. Also binds the alpha-4/beta-1 (ITGA4/ITGB1) integrin. Is a potent inhibitor of human and murine melanoma metastases in mouse model systems, also due to the inhibition of binding between the alpha-4/beta-1 integrin and the vascular cell adhesion protein VCAM1. Reacts neither with the integrin alpha-V/beta-3 (ITGAV/ITGB3) vitronectin receptor nor with the integrin alpha-5/beta-1 (ITGA5/ITGB1) fibronectin receptor. Has no effect on cell proliferation or angiogenesis. Specifically inhibits cell migration on fibronectin, but not that on collagen IV or laminin. May involve fibronectin-binding integrins that mediate cell migration. This is Disintegrin eristostatin from Eristicophis macmahoni (Leaf-nosed viper).